Here is a 487-residue protein sequence, read N- to C-terminus: b(0,+)-type amino acid transporter 1 (487 aa).

Residues methionine 1 to glutamate 20 form a disordered region. Topologically, residues methionine 1–glycine 31 are cytoplasmic. Serine 18 is modified (phosphoserine). A helical transmembrane segment spans residues leucine 32–valine 55. Isoleucine 43–glycine 47 contributes to the L-arginine binding site. Residues leucine 56–valine 62 lie on the Extracellular side of the membrane. A helical transmembrane segment spans residues glycine 63–alanine 84. The Cytoplasmic segment spans residues glutamate 85–tyrosine 110. A helical transmembrane segment spans residues leucine 111–cysteine 137. Over alanine 138–proline 147 the chain is Extracellular. 2 helical membrane passes run alanine 148–serine 169 and valine 170–isoleucine 193. At serine 194–serine 217 the chain is on the extracellular side. A helical transmembrane segment spans residues valine 218 to leucine 238. Aspartate 233 provides a ligand contact to L-arginine. At asparagine 239–asparagine 251 the chain is on the cytoplasmic side. A helical membrane pass occupies residues leucine 252–tyrosine 274. Over phenylalanine 275–serine 302 the chain is Extracellular. The helical transmembrane segment at tryptophan 303–glycine 325 threads the bilayer. The Cytoplasmic portion of the chain corresponds to arginine 326–proline 351. The next 2 membrane-spanning stretches (helical) occupy residues alanine 352–aspartate 370 and isoleucine 371–leucine 391. The Cytoplasmic portion of the chain corresponds to glycine 392–proline 410. A helical membrane pass occupies residues leucine 411 to serine 431. The Extracellular portion of the chain corresponds to glutamate 432–alanine 434. Residues tryptophan 435–phenylalanine 450 form a helical membrane-spanning segment. The Cytoplasmic segment spans residues tyrosine 451–glutamate 487.

Belongs to the amino acid-polyamine-organocation (APC) superfamily. Disulfide-linked heterodimer composed of the catalytic light chain subunit SLC7A9 and the heavy chain subunit SLC3A1. The heterodimer is the minimal functional unit. Assembles in heterotetramers (dimers of heterodimers) and higher order oligomers; the oligomerization is mediated by SLC3A1 likely to prevent degradation and facilitate heteromer trafficking to the plasma membrane. Interacts with CAV1. Expressed in the brush border membrane in the kidney (at protein level).

The protein resides in the apical cell membrane. The enzyme catalyses L-leucine(out) + L-arginine(in) = L-leucine(in) + L-arginine(out). It carries out the reaction L-histidine(out) + L-arginine(in) = L-histidine(in) + L-arginine(out). It catalyses the reaction L-arginine(in) + L-phenylalanine(out) = L-arginine(out) + L-phenylalanine(in). The catalysed reaction is L-cysteine(out) + L-arginine(in) = L-cysteine(in) + L-arginine(out). The enzyme catalyses L-cystine(out) + L-arginine(in) = L-cystine(in) + L-arginine(out). It carries out the reaction L-lysine(out) + L-arginine(in) = L-lysine(in) + L-arginine(out). Functionally, associates with SLC3A1 to form a functional transporter complex that mediates the electrogenic exchange between cationic amino acids and neutral amino acids, with a stoichiometry of 1:1. Has system b(0,+)-like activity with high affinity for extracellular cationic amino acids and L-cystine and lower affinity for intracellular neutral amino acids. Substrate exchange is driven by high concentration of intracellular neutral amino acids and the intracellular reduction of L-cystine to L-cysteine. Required for reabsorption of L-cystine and dibasic amino acids across the brush border membrane in renal proximal tubules. The sequence is that of b(0,+)-type amino acid transporter 1 (Slc7a9) from Mus musculus (Mouse).